A 465-amino-acid chain; its full sequence is CUGBP Elav-like family member 3 (465 aa).

RRM domains are found at residues 7-88 and 95-175; these read IKLF…PADS and RKLF…FADT. The segment covering 346–359 has biased composition (pro residues); sequence PPALVAQQPPPPPQ. A disordered region spans residues 346–379; the sequence is PPALVAQQPPPPPQQQQQQQQQQQQQQQREGPDG. The span at 360–373 shows a compositional bias: low complexity; the sequence is QQQQQQQQQQQQQQ. One can recognise an RRM 3 domain in the interval 380-458; the sequence is CNIFIYHLPQ…KRLKVQLKRP (79 aa).

Belongs to the CELF/BRUNOL family. In terms of tissue distribution, expressed in brain.

Its subcellular location is the nucleus. It is found in the cytoplasm. RNA-binding protein involved in the regulation of pre-mRNA alternative splicing. Mediates exon inclusion and/or exclusion in pre-mRNA that are subject to tissue-specific and developmentally regulated alternative splicing. Specifically activates exon 5 inclusion of cardiac isoforms of TNNT2 during heart remodeling at the juvenile to adult transition. Activates the splicing of MAPT/Tau exon 10. Binds to muscle-specific splicing enhancer (MSE) intronic sites flanking the alternative exon 5 of TNNT2 pre-mRNA. The polypeptide is CUGBP Elav-like family member 3 (CELF3) (Homo sapiens (Human)).